A 600-amino-acid polypeptide reads, in one-letter code: Zinc metalloproteinase-disintegrin-like cobrin (600 aa).

An N-terminal signal peptide occupies residues 1-8 (MIQLSWSS). Positions 9 to 179 (IILESGNVND…DEPIKKTSLL (171 aa)) are excised as a propeptide. The 196-residue stretch at 193 to 388 (KYIEFYMVVD…DRPQCILNKP (196 aa)) folds into the Peptidase M12B domain. Glu196 and Asp280 together coordinate Ca(2+). Cystine bridges form between Cys304–Cys383, Cys344–Cys367, and Cys346–Cys351. Zn(2+) contacts are provided by His329, His333, and His339. Ca(2+) contacts are provided by Cys383, Asn386, Ile398, Asn401, Phe403, Glu405, Glu408, and Asp411. Residues 396–482 (PPICGNYFVE…ECPTDVFQRN (87 aa)) form the Disintegrin domain. 14 disulfide bridges follow: Cys399/Cys428, Cys410/Cys423, Cys412/Cys418, Cys422/Cys445, Cys436/Cys442, Cys441/Cys467, Cys454/Cys474, Cys461/Cys492, Cys486/Cys497, Cys504/Cys554, Cys519/Cys562, Cys532/Cys542, Cys549/Cys588, and Cys582/Cys593. Asn424 carries an N-linked (GlcNAc...) asparagine glycan. Residues 460 to 462 (DCD) carry the D/ECD-tripeptide motif. 5 residues coordinate Ca(2+): Asp462, Leu463, Glu465, Asp477, and Val478.

Belongs to the venom metalloproteinase (M12B) family. P-III subfamily. P-IIIa sub-subfamily. As to quaternary structure, monomer. Requires Zn(2+) as cofactor. In terms of tissue distribution, expressed by the venom gland.

It is found in the secreted. Functionally, snake venom zinc metalloproteinase that may cleave complement protein C3 into C3c-like (C3o). In Naja kaouthia (Monocled cobra), this protein is Zinc metalloproteinase-disintegrin-like cobrin.